Reading from the N-terminus, the 666-residue chain is tRNA 5-methylaminomethyl-2-thiouridine biosynthesis bifunctional protein MnmC (666 aa).

A tRNA (mnm(5)s(2)U34)-methyltransferase region spans residues 1-245 (MKQYAIQPAT…KREMLCGVME (245 aa)). The segment at 270–666 (IGGGIASALL…RKLLKGKAVK (397 aa)) is FAD-dependent cmnm(5)s(2)U34 oxidoreductase.

In the N-terminal section; belongs to the methyltransferase superfamily. tRNA (mnm(5)s(2)U34)-methyltransferase family. The protein in the C-terminal section; belongs to the DAO family. It depends on FAD as a cofactor.

The protein localises to the cytoplasm. The catalysed reaction is 5-aminomethyl-2-thiouridine(34) in tRNA + S-adenosyl-L-methionine = 5-methylaminomethyl-2-thiouridine(34) in tRNA + S-adenosyl-L-homocysteine + H(+). In terms of biological role, catalyzes the last two steps in the biosynthesis of 5-methylaminomethyl-2-thiouridine (mnm(5)s(2)U) at the wobble position (U34) in tRNA. Catalyzes the FAD-dependent demodification of cmnm(5)s(2)U34 to nm(5)s(2)U34, followed by the transfer of a methyl group from S-adenosyl-L-methionine to nm(5)s(2)U34, to form mnm(5)s(2)U34. In Salmonella paratyphi A (strain ATCC 9150 / SARB42), this protein is tRNA 5-methylaminomethyl-2-thiouridine biosynthesis bifunctional protein MnmC.